The following is a 270-amino-acid chain: NAD kinase (270 aa).

Aspartate 45 acts as the Proton acceptor in catalysis. NAD(+) contacts are provided by residues 45 to 46 (DG), 121 to 122 (NE), arginine 147, aspartate 149, 160 to 165 (TAYNKS), and alanine 184.

The protein belongs to the NAD kinase family. A divalent metal cation serves as cofactor.

It is found in the cytoplasm. The catalysed reaction is NAD(+) + ATP = ADP + NADP(+) + H(+). Functionally, involved in the regulation of the intracellular balance of NAD and NADP, and is a key enzyme in the biosynthesis of NADP. Catalyzes specifically the phosphorylation on 2'-hydroxyl of the adenosine moiety of NAD to yield NADP. The chain is NAD kinase from Limosilactobacillus reuteri subsp. reuteri (strain JCM 1112) (Lactobacillus reuteri).